Consider the following 259-residue polypeptide: Protein unc-50 homolog (259 aa).

At methionine 1 the chain carries N-acetylmethionine. The Cytoplasmic portion of the chain corresponds to 1–82 (MLPSTSLNSS…TKDQWARDDP (82 aa)). The residue at position 6 (serine 6) is a Phosphoserine. Residues 83 to 103 (AFLVLLSIWLCVSTIGFGFVL) traverse the membrane as a helical segment. Residues 104-115 (DMGFFETIKLLL) are Lumenal-facing. The helical transmembrane segment at 116-136 (WVVFIDCVGVGLLISTLMWFI) threads the bilayer. Over 137–163 (SNKYLVKRQSRDYDVEWGYAFDVHLNA) the chain is Cytoplasmic. Residues 164–184 (FYPLLVILHFIQLFFINHVIL) form a helical membrane-spanning segment. Topologically, residues 185–187 (TDT) are lumenal. The chain crosses the membrane as a helical span at residues 188-208 (FIGYLVGNTLWLIAVGYYIYV). The Cytoplasmic segment spans residues 209–222 (TFLGYSALPFLKNT). A helical membrane pass occupies residues 223 to 243 (VVLLYPFAPLIVLYGLSLALG). Over 244-259 (WNFTHTLCSFYKYRVK) the chain is Lumenal.

The protein belongs to the unc-50 family. In terms of tissue distribution, expressed in brain, kidney and testis, and at lower levels in heart.

The protein localises to the nucleus inner membrane. Its subcellular location is the golgi apparatus membrane. In terms of biological role, involved in the cell surface expression of neuronal nicotinic receptors. Binds RNA. This Rattus norvegicus (Rat) protein is Protein unc-50 homolog (Unc50).